Reading from the N-terminus, the 883-residue chain is Brevican core protein (883 aa).

Residues 1 to 22 (MIPLLLSLLAALVLTQAPAALA) form the signal peptide. The 120-residue stretch at 35 to 154 (FRVRIGATQL…SSDAVEVKVK (120 aa)) folds into the Ig-like V-type domain. 5 disulfides stabilise this stretch: Cys56–Cys136, Cys178–Cys249, Cys202–Cys223, Cys276–Cys351, and Cys300–Cys321. N-linked (GlcNAc...) asparagine glycosylation is present at Asn129. Link domains follow at residues 156-251 (VVFL…YCYA) and 256-353 (GELF…YCFR). Ser224 is subject to Phosphoserine. An N-linked (GlcNAc...) asparagine glycan is attached at Asn336. The disordered stretch occupies residues 402 to 592 (SIPISEDGGG…LETPSEEKSG (191 aa)). Ser413 carries the post-translational modification Phosphoserine. The O-linked (Xyl...) (chondroitin sulfate) serine glycan is linked to Ser413. Acidic residues-rich tracts occupy residues 440 to 451 (SSEEEGVALEEE) and 459 to 468 (ALEEEKEQED). Over residues 479–495 (PLPTGSETEHSLSQVSP) the composition is skewed to polar residues. Over residues 581–592 (RELETPSEEKSG) the composition is skewed to basic and acidic residues. Residues 622-658 (SSGDCIPSPCHNGGTCLEEKEGFRCLCLPGYGGDLCD) form the EGF-like domain. Disulfide bonds link Cys626–Cys637, Cys631–Cys646, Cys648–Cys657, Cys664–Cys675, Cys692–Cys784, Cys760–Cys776, Cys791–Cys834, and Cys820–Cys847. Residues 658-786 (DVGLHFCSPG…NYHLSYTCKM (129 aa)) enclose the C-type lectin domain. In terms of domain architecture, Sushi spans 789-849 (VSCGPPPQLP…WEAPQISCVP (61 aa)). Residues 854–883 (RALRSMDAPEGPRGQLSRHRKAPLTPPSSL) form a disordered region.

Belongs to the aggrecan/versican proteoglycan family. In terms of assembly, interacts with TNR. Post-translationally, O-glycosylated; contains chondroitin sulfate. As to expression, expressed in the retina, specifically around the inner and outer segments of photoreceptors, retinal pigment epithelium, outer plexiform layer, and the ganglion cell layer (at protein level). Brain. Expressed in the brainstem and cerebellum in a perineuronal net pattern.

The protein resides in the secreted. It is found in the extracellular space. The protein localises to the extracellular matrix. May play a role in the terminally differentiating and the adult nervous system during postnatal development. Could stabilize interactions between hyaluronan (HA) and brain proteoglycans. This is Brevican core protein (Bcan) from Mus musculus (Mouse).